The chain runs to 156 residues: ATP synthase subunit b (156 aa).

The chain crosses the membrane as a helical span at residues 12–32; that stretch reads VAFFIFVIFCMKFVWPPVIAA.

The protein belongs to the ATPase B chain family. F-type ATPases have 2 components, F(1) - the catalytic core - and F(0) - the membrane proton channel. F(1) has five subunits: alpha(3), beta(3), gamma(1), delta(1), epsilon(1). F(0) has three main subunits: a(1), b(2) and c(10-14). The alpha and beta chains form an alternating ring which encloses part of the gamma chain. F(1) is attached to F(0) by a central stalk formed by the gamma and epsilon chains, while a peripheral stalk is formed by the delta and b chains.

It is found in the cell inner membrane. F(1)F(0) ATP synthase produces ATP from ADP in the presence of a proton or sodium gradient. F-type ATPases consist of two structural domains, F(1) containing the extramembraneous catalytic core and F(0) containing the membrane proton channel, linked together by a central stalk and a peripheral stalk. During catalysis, ATP synthesis in the catalytic domain of F(1) is coupled via a rotary mechanism of the central stalk subunits to proton translocation. In terms of biological role, component of the F(0) channel, it forms part of the peripheral stalk, linking F(1) to F(0). This is ATP synthase subunit b from Pseudomonas savastanoi pv. phaseolicola (strain 1448A / Race 6) (Pseudomonas syringae pv. phaseolicola (strain 1448A / Race 6)).